A 499-amino-acid chain; its full sequence is Glutamate--tRNA ligase (499 aa).

Positions 12–22 (PSPTGHLHIGN) match the 'HIGH' region motif. Positions 259-263 (KLSKR) match the 'KMSKS' region motif. Lysine 262 contacts ATP.

It belongs to the class-I aminoacyl-tRNA synthetase family. Glutamate--tRNA ligase type 1 subfamily. In terms of assembly, monomer.

The protein resides in the cytoplasm. The catalysed reaction is tRNA(Glu) + L-glutamate + ATP = L-glutamyl-tRNA(Glu) + AMP + diphosphate. Functionally, catalyzes the attachment of glutamate to tRNA(Glu) in a two-step reaction: glutamate is first activated by ATP to form Glu-AMP and then transferred to the acceptor end of tRNA(Glu). The polypeptide is Glutamate--tRNA ligase (Lactobacillus johnsonii (strain CNCM I-12250 / La1 / NCC 533)).